Here is a 385-residue protein sequence, read N- to C-terminus: Guanine nucleotide-binding protein alpha-5 subunit (385 aa).

Gly-2 carries N-myristoyl glycine lipidation. Cys-6 carries the S-palmitoyl cysteine lipid modification. Positions Arg-32–Glu-385 constitute a G-alpha domain. The interval Lys-35 to Thr-48 is G1 motif. GTP contacts are provided by residues Gly-40–Ser-47, Ile-174–Thr-180, Asp-199–Gln-203, Asn-298–Asp-301, and Ala-357. Residues Ser-47 and Thr-180 each coordinate Mg(2+). Residues Asp-172–Thr-180 are G2 motif. Residues Ile-195–Lys-204 form a G3 motif region. The tract at residues Met-294–Asp-301 is G4 motif. The interval Thr-355–Thr-360 is G5 motif.

Belongs to the G-alpha family. As to quaternary structure, g proteins are composed of 3 units; alpha, beta and gamma. The alpha chain contains the guanine nucleotide binding site.

Its function is as follows. Guanine nucleotide-binding proteins (G proteins) are involved as modulators or transducers in various transmembrane signaling systems. This chain is Guanine nucleotide-binding protein alpha-5 subunit (gpa-5), found in Caenorhabditis elegans.